A 124-amino-acid polypeptide reads, in one-letter code: Glycine cleavage system H protein (124 aa).

One can recognise a Lipoyl-binding domain in the interval Thr-24–Lys-106. Lys-65 is modified (N6-lipoyllysine).

This sequence belongs to the GcvH family. As to quaternary structure, the glycine cleavage system is composed of four proteins: P, T, L and H. It depends on (R)-lipoate as a cofactor.

Its function is as follows. The glycine cleavage system catalyzes the degradation of glycine. The H protein shuttles the methylamine group of glycine from the P protein to the T protein. This Ruthia magnifica subsp. Calyptogena magnifica protein is Glycine cleavage system H protein.